The primary structure comprises 292 residues: Ribosomal RNA small subunit methyltransferase A (292 aa).

6 residues coordinate S-adenosyl-L-methionine: Asn28, Leu30, Gly55, Glu76, Asp101, and Asn126.

This sequence belongs to the class I-like SAM-binding methyltransferase superfamily. rRNA adenine N(6)-methyltransferase family. RsmA subfamily.

It is found in the cytoplasm. It carries out the reaction adenosine(1518)/adenosine(1519) in 16S rRNA + 4 S-adenosyl-L-methionine = N(6)-dimethyladenosine(1518)/N(6)-dimethyladenosine(1519) in 16S rRNA + 4 S-adenosyl-L-homocysteine + 4 H(+). Its function is as follows. Specifically dimethylates two adjacent adenosines (A1518 and A1519) in the loop of a conserved hairpin near the 3'-end of 16S rRNA in the 30S particle. May play a critical role in biogenesis of 30S subunits. This Bacillus anthracis protein is Ribosomal RNA small subunit methyltransferase A.